Consider the following 373-residue polypeptide: XK-related protein 9 (373 aa).

The next 8 membrane-spanning stretches (helical) occupy residues 8–28 (FMMS…DIVL), 38–58 (YVLG…VHCF), 166–186 (MVIM…QIAL), 206–226 (LFYK…LLFV), 230–250 (VALL…FINH), 256–276 (SVSM…FTFF), 295–315 (VLGT…IFNS), and 318–338 (FIPI…FLGV).

This sequence belongs to the XK family. In terms of processing, undergoes proteolytic processing by caspase-3 (CASP3), caspase-6 (CASP6) and caspase-7 (CASP7) to generate the XK-related protein 9, processed form, leading to its activation. Highly expressed in the small intestines; weakly expressed in the pancreas, liver, stomach, and large intestines.

It localises to the cell membrane. The catalysed reaction is a 1,2-diacyl-sn-glycero-3-phospho-L-serine(in) = a 1,2-diacyl-sn-glycero-3-phospho-L-serine(out). With respect to regulation, activated upon caspase cleavage to generate the XK-related protein 9, processed form. Does not act prior the onset of apoptosis. Functionally, phospholipid scramblase that promotes phosphatidylserine exposure on apoptotic cell surface. Phosphatidylserine is a specific marker only present at the surface of apoptotic cells and acts as a specific signal for engulfment. This is XK-related protein 9 from Mus musculus (Mouse).